A 444-amino-acid polypeptide reads, in one-letter code: Phosphoribosylamine--glycine ligase (444 aa).

Residues 109–324 form the ATP-grasp domain; that stretch reads RNLFKKYNIK…FLEVCEAIVN (216 aa). 140-202 lines the ATP pocket; it reads LTEKGIKAVV…EEKLEGVEFT (63 aa). Residues Q282, E294, and N296 each coordinate Mg(2+). Mn(2+) is bound by residues Q282, E294, and N296.

It belongs to the GARS family. Requires Mg(2+) as cofactor. Mn(2+) is required as a cofactor.

It carries out the reaction 5-phospho-beta-D-ribosylamine + glycine + ATP = N(1)-(5-phospho-beta-D-ribosyl)glycinamide + ADP + phosphate + H(+). It functions in the pathway purine metabolism; IMP biosynthesis via de novo pathway; N(1)-(5-phospho-D-ribosyl)glycinamide from 5-phospho-alpha-D-ribose 1-diphosphate: step 2/2. This is Phosphoribosylamine--glycine ligase from Methanocaldococcus jannaschii (strain ATCC 43067 / DSM 2661 / JAL-1 / JCM 10045 / NBRC 100440) (Methanococcus jannaschii).